A 439-amino-acid polypeptide reads, in one-letter code: Acyl transferase 4 (439 aa).

Active-site proton acceptor residues include His166 and Asp382.

Belongs to the plant acyltransferase family.

In terms of biological role, grass-specific monolignol p-coumaroyl transferase involved in the biosynthesis of acylated monolignols or monolignol conjugates that serve as monomer precursors of lignin. Can synthesize sinapyl p-coumarate, p-coumaryl p-coumarate, sinapyl caffeate and p-coumaryl caffeate in vitro. The protein is Acyl transferase 4 of Oryza sativa subsp. japonica (Rice).